Reading from the N-terminus, the 245-residue chain is 1-(5-phosphoribosyl)-5-[(5-phosphoribosylamino)methylideneamino] imidazole-4-carboxamide isomerase (245 aa).

The active-site Proton acceptor is the aspartate 7. Catalysis depends on aspartate 129, which acts as the Proton donor.

This sequence belongs to the HisA/HisF family.

The protein resides in the cytoplasm. It carries out the reaction 1-(5-phospho-beta-D-ribosyl)-5-[(5-phospho-beta-D-ribosylamino)methylideneamino]imidazole-4-carboxamide = 5-[(5-phospho-1-deoxy-D-ribulos-1-ylimino)methylamino]-1-(5-phospho-beta-D-ribosyl)imidazole-4-carboxamide. Its pathway is amino-acid biosynthesis; L-histidine biosynthesis; L-histidine from 5-phospho-alpha-D-ribose 1-diphosphate: step 4/9. The polypeptide is 1-(5-phosphoribosyl)-5-[(5-phosphoribosylamino)methylideneamino] imidazole-4-carboxamide isomerase (Shigella boydii serotype 4 (strain Sb227)).